The following is a 198-amino-acid chain: Recombination protein RecR (198 aa).

The C4-type zinc-finger motif lies at 58 to 73 (CSTCGNFTDTDPCALC). In terms of domain architecture, Toprim spans 81–175 (STICVVEQPK…KVTRIAAGIP (95 aa)).

Belongs to the RecR family.

Its function is as follows. May play a role in DNA repair. It seems to be involved in an RecBC-independent recombinational process of DNA repair. It may act with RecF and RecO. In Clostridium botulinum (strain Alaska E43 / Type E3), this protein is Recombination protein RecR.